Reading from the N-terminus, the 438-residue chain is Argininosuccinate lyase (438 aa).

The protein belongs to the lyase 1 family. Argininosuccinate lyase subfamily.

The protein localises to the cytoplasm. The catalysed reaction is 2-(N(omega)-L-arginino)succinate = fumarate + L-arginine. It functions in the pathway amino-acid biosynthesis; L-arginine biosynthesis; L-arginine from L-ornithine and carbamoyl phosphate: step 3/3. This is Argininosuccinate lyase from Clostridioides difficile (strain 630) (Peptoclostridium difficile).